A 121-amino-acid polypeptide reads, in one-letter code: Large ribosomal subunit protein bL20 (121 aa).

Belongs to the bacterial ribosomal protein bL20 family.

In terms of biological role, binds directly to 23S ribosomal RNA and is necessary for the in vitro assembly process of the 50S ribosomal subunit. It is not involved in the protein synthesizing functions of that subunit. The chain is Large ribosomal subunit protein bL20 from Koribacter versatilis (strain Ellin345).